The chain runs to 178 residues: Bifunctional protein PyrR (178 aa).

Positions 99 to 111 match the PRPP-binding motif; sequence VILVDDVLFTGRT.

Belongs to the purine/pyrimidine phosphoribosyltransferase family. PyrR subfamily. In terms of assembly, homodimer and homohexamer; in equilibrium.

It carries out the reaction UMP + diphosphate = 5-phospho-alpha-D-ribose 1-diphosphate + uracil. In terms of biological role, regulates transcriptional attenuation of the pyrimidine nucleotide (pyr) operon by binding in a uridine-dependent manner to specific sites on pyr mRNA. This disrupts an antiterminator hairpin in the RNA and favors formation of a downstream transcription terminator, leading to a reduced expression of downstream genes. Functionally, also displays a weak uracil phosphoribosyltransferase activity which is not physiologically significant. This chain is Bifunctional protein PyrR, found in Ligilactobacillus salivarius (strain UCC118) (Lactobacillus salivarius).